The following is a 304-amino-acid chain: Galactose 1-dehydrogenase (304 aa).

The protein belongs to the Gfo/Idh/MocA family. Homodimer.

It is found in the cytoplasm. It catalyses the reaction D-galactose + NAD(+) = D-galactono-1,4-lactone + NADH + H(+). It participates in carbohydrate metabolism; galactose metabolism. Its function is as follows. Catalyzes the dehydrogenation of D-galactose by either NAD(+) or NADP(+). Oxidizes following sugars in decreasing order: D-fucose &gt; D-galactose &gt; L-arabinose &gt; 2-deoxy-D-galactose &gt;&gt; 4-deoxy-D-galactose &gt; 2-deoxy-2-amino-D-galactose. This Pseudomonas fluorescens protein is Galactose 1-dehydrogenase (gal).